The primary structure comprises 228 residues: Calcyclin-binding protein (228 aa).

N-acetylmethionine is present on Met-1. Ala-2 is subject to N-acetylalanine. Positions Ala-2–Trp-80 are interaction with SIAH1. Phosphoserine is present on Ser-3. Lys-8 and Lys-19 each carry N6-acetyllysine. Ser-34 bears the Phosphoserine mark. The CS domain maps to Val-73–Thr-167. The tract at residues Val-73–Phe-228 is interaction with SKP1. N6-acetyllysine is present on residues Lys-85 and Lys-118. Residues Cys-154 to Phe-228 form an interaction with S100A6 region. One can recognise an SGS domain in the interval Gln-168–Phe-228.

Homodimer. Interacts with proteins of the S100 family S100A1, S100A6, S100B, S100P and S100A12 in a calcium-dependent manner. Component of some large E3 complex at least composed of UBE2D1, SIAH1, CACYBP/SIP, SKP1, APC and TBL1X. Interacts directly with SIAH1, SIAH2 and SKP1. In terms of processing, phosphorylated on serine residues. Phosphorylated upon induction by RA or at high calcium concentrations.

It localises to the nucleus. It is found in the cytoplasm. Its function is as follows. May be involved in calcium-dependent ubiquitination and subsequent proteasomal degradation of target proteins. Probably serves as a molecular bridge in ubiquitin E3 complexes. Participates in the ubiquitin-mediated degradation of beta-catenin (CTNNB1). The protein is Calcyclin-binding protein (CACYBP) of Homo sapiens (Human).